Reading from the N-terminus, the 117-residue chain is Ubiquitin-like protein 3 (117 aa).

The region spanning 10–88 is the Ubiquitin-like domain; the sequence is INLRLILVSG…PFGKTTVMHL (79 aa). Residue Cys-113 is the site of S-palmitoyl cysteine attachment. At Cys-114 the chain carries Cysteine methyl ester. Cys-114 is lipidated: S-geranylgeranyl cysteine. Residues 115 to 117 constitute a propeptide, removed in mature form; that stretch reads VIL.

Its subcellular location is the cell membrane. This is Ubiquitin-like protein 3 (Ubl3) from Mus musculus (Mouse).